A 391-amino-acid polypeptide reads, in one-letter code: Arrestin-C (391 aa).

The span at 369–379 (ARQEPGGREES) shows a compositional bias: basic and acidic residues. A disordered region spans residues 369 to 391 (ARQEPGGREESQEALAAEGDEGS).

This sequence belongs to the arrestin family. In terms of assembly, homodimer; disulfide-linked in response to retinal illumination. Interacts with CXCR4; the interaction is dependent on the C-terminal phosphorylation of CXCR4 and modulates the calcium ion mobilization activity of CXCR4. Interacts with GPR84.

It is found in the photoreceptor inner segment. It localises to the cell projection. Its subcellular location is the cilium. The protein resides in the photoreceptor outer segment. Functionally, may play a role in an as yet undefined retina-specific signal transduction. Could bind to photoactivated-phosphorylated red/green opsins. This Sus scrofa (Pig) protein is Arrestin-C (ARR3).